The following is a 126-amino-acid chain: Small ribosomal subunit protein uS13 (126 aa).

The interval 95-126 is disordered; the sequence is GMPVRGQRTRTNARTRRGRRGQAIGIKKKVKK.

The protein belongs to the universal ribosomal protein uS13 family. Part of the 30S ribosomal subunit. Forms a loose heterodimer with protein S19. Forms two bridges to the 50S subunit in the 70S ribosome.

Its function is as follows. Located at the top of the head of the 30S subunit, it contacts several helices of the 16S rRNA. In the 70S ribosome it contacts the 23S rRNA (bridge B1a) and protein L5 of the 50S subunit (bridge B1b), connecting the 2 subunits; these bridges are implicated in subunit movement. Contacts the tRNAs in the A and P-sites. The sequence is that of Small ribosomal subunit protein uS13 from Chloroflexus aggregans (strain MD-66 / DSM 9485).